Reading from the N-terminus, the 762-residue chain is 5-methyltetrahydropteroyltriglutamate--homocysteine methyltransferase (762 aa).

Residues 17–20 (REWK) and Lys-111 contribute to the 5-methyltetrahydropteroyltri-L-glutamate site. Residues 435–437 (IGS) and Glu-488 each bind L-homocysteine. Residues 435–437 (IGS) and Glu-488 contribute to the L-methionine site. 5-methyltetrahydropteroyltri-L-glutamate is bound by residues 519 to 520 (RC) and Trp-565. Asp-603 contacts L-homocysteine. Asp-603 provides a ligand contact to L-methionine. Glu-609 serves as a coordination point for 5-methyltetrahydropteroyltri-L-glutamate. His-645, Cys-647, and Glu-669 together coordinate Zn(2+). The active-site Proton donor is His-698. Cys-730 contributes to the Zn(2+) binding site.

Belongs to the vitamin-B12 independent methionine synthase family. Zn(2+) serves as cofactor.

It catalyses the reaction 5-methyltetrahydropteroyltri-L-glutamate + L-homocysteine = tetrahydropteroyltri-L-glutamate + L-methionine. The protein operates within amino-acid biosynthesis; L-methionine biosynthesis via de novo pathway; L-methionine from L-homocysteine (MetE route): step 1/1. Its function is as follows. Catalyzes the transfer of a methyl group from 5-methyltetrahydrofolate to homocysteine resulting in methionine formation. This Bacillus cereus (strain G9842) protein is 5-methyltetrahydropteroyltriglutamate--homocysteine methyltransferase.